The chain runs to 222 residues: Octanoyltransferase (222 aa).

Residues 35 to 210 (ETTPDELWLV…EFVHLLGYPK (176 aa)) form the BPL/LPL catalytic domain. Residues 74 to 81 (RGGQVTYH), 141 to 143 (SLG), and 154 to 156 (GLA) each bind substrate. The active-site Acyl-thioester intermediate is Cys-172.

Belongs to the LipB family.

The protein localises to the cytoplasm. It carries out the reaction octanoyl-[ACP] + L-lysyl-[protein] = N(6)-octanoyl-L-lysyl-[protein] + holo-[ACP] + H(+). Its pathway is protein modification; protein lipoylation via endogenous pathway; protein N(6)-(lipoyl)lysine from octanoyl-[acyl-carrier-protein]: step 1/2. Its function is as follows. Catalyzes the transfer of endogenously produced octanoic acid from octanoyl-acyl-carrier-protein onto the lipoyl domains of lipoate-dependent enzymes. Lipoyl-ACP can also act as a substrate although octanoyl-ACP is likely to be the physiological substrate. This chain is Octanoyltransferase, found in Serratia proteamaculans (strain 568).